The primary structure comprises 372 residues: Pyrimidine monooxygenase RutA (372 aa).

FMN contacts are provided by residues 57-58 (IK), asparagine 123, glutamate 132, 148-149 (RY), and serine 198.

It belongs to the NtaA/SnaA/DszA monooxygenase family. RutA subfamily.

It carries out the reaction uracil + FMNH2 + NADH + O2 = (Z)-3-ureidoacrylate + FMN + NAD(+) + H2O + H(+). It catalyses the reaction thymine + FMNH2 + NADH + O2 = (Z)-2-methylureidoacrylate + FMN + NAD(+) + H2O + H(+). Its function is as follows. Catalyzes the pyrimidine ring opening between N-3 and C-4 by an unusual flavin hydroperoxide-catalyzed mechanism, adding oxygen atoms in the process to yield ureidoacrylate peracid, that immediately reacts with FMN forming ureidoacrylate and FMN-N(5)-oxide. The FMN-N(5)-oxide reacts spontaneously with NADH to produce FMN. Requires the flavin reductase RutF to regenerate FMN in vivo. The chain is Pyrimidine monooxygenase RutA from Methylorubrum extorquens (strain PA1) (Methylobacterium extorquens).